The following is a 334-amino-acid chain: Porphobilinogen deaminase (334 aa).

The residue at position 258 (Cys-258) is an S-(dipyrrolylmethanemethyl)cysteine.

Belongs to the HMBS family. In terms of assembly, monomer. Dipyrromethane serves as cofactor.

The catalysed reaction is 4 porphobilinogen + H2O = hydroxymethylbilane + 4 NH4(+). The protein operates within porphyrin-containing compound metabolism; protoporphyrin-IX biosynthesis; coproporphyrinogen-III from 5-aminolevulinate: step 2/4. In terms of biological role, tetrapolymerization of the monopyrrole PBG into the hydroxymethylbilane pre-uroporphyrinogen in several discrete steps. The chain is Porphobilinogen deaminase from Ralstonia nicotianae (strain ATCC BAA-1114 / GMI1000) (Ralstonia solanacearum).